We begin with the raw amino-acid sequence, 336 residues long: Atypical chemokine receptor 1 (336 aa).

The Extracellular segment spans residues 1–63 (MGNCLHQAEL…CNLLDDSSLP (63 aa)). Residues N16, N27, and N33 are each glycosylated (N-linked (GlcNAc...) asparagine). 2 disulfides stabilise this stretch: C51/C276 and C129/C195. The helical transmembrane segment at 64 to 84 (FFILASVLGILASSTVLFLLF) threads the bilayer. Over 85–95 (RPLFRWQLCPG) the chain is Cytoplasmic. Residues 96–116 (WPVLAQLAVGSTLFSIVVPIL) traverse the membrane as a helical segment. Over 117-129 (APGLGNTRSSAPC) the chain is Extracellular. Residues 130-153 (SLGYCVWYGSAFAQALLLGCHASL) form a helical membrane-spanning segment. The Cytoplasmic segment spans residues 154-166 (GPKLGAGQVPGLT). A helical membrane pass occupies residues 167-187 (LGLSVGLWGAAALLTLPITLA). Over 188–207 (SDASDGLCTPIYSTELKALQ) the chain is Extracellular. The chain crosses the membrane as a helical span at residues 208–228 (ATHTVACFAIFVLLPLGLFGA). The Cytoplasmic segment spans residues 229-244 (KGLKKVLGMGPGPWMN). A helical transmembrane segment spans residues 245 to 265 (ILWVWFIFWWPHGVVLGLDFL). At 266–287 (VRSKLLLLPTCLAQQVLDLLLN) the chain is on the extracellular side. Residues 288-308 (LAEALAIVHCVATPLLLALFC) form a helical membrane-spanning segment. Residues 309 to 336 (HQATRTLVPSLPLPERWSSPVDTLGSKS) lie on the Cytoplasmic side of the membrane.

The protein belongs to the G-protein coupled receptor 1 family. Atypical chemokine receptor subfamily.

Its subcellular location is the early endosome. The protein resides in the recycling endosome. It localises to the membrane. In terms of biological role, atypical chemokine receptor that controls chemokine levels and localization via high-affinity chemokine binding that is uncoupled from classic ligand-driven signal transduction cascades, resulting instead in chemokine sequestration, degradation, or transcytosis. Also known as interceptor (internalizing receptor) or chemokine-scavenging receptor or chemokine decoy receptor. Has a promiscuous chemokine-binding profile, interacting with inflammatory chemokines of both the CXC and the CC subfamilies but not with homeostatic chemokines. Acts as a receptor for chemokines including CCL2, CCL5, CCL7, CCL11, CCL13, CCL14, CCL17, CXCL5, CXCL6, IL8/CXCL8, CXCL11, GRO, RANTES, MCP-1 and TARC. May regulate chemokine bioavailability and, consequently, leukocyte recruitment through two distinct mechanisms: when expressed in endothelial cells, it sustains the abluminal to luminal transcytosis of tissue-derived chemokines and their subsequent presentation to circulating leukocytes; when expressed in erythrocytes, serves as blood reservoir of cognate chemokines but also as a chemokine sink, buffering potential surges in plasma chemokine levels. In Saguinus imperator (Emperor tamarin), this protein is Atypical chemokine receptor 1 (ACKR1).